The following is a 179-amino-acid chain: Large ribosomal subunit protein uL5 (179 aa).

Belongs to the universal ribosomal protein uL5 family. As to quaternary structure, part of the 50S ribosomal subunit; part of the 5S rRNA/L5/L18/L25 subcomplex. Contacts the 5S rRNA and the P site tRNA. Forms a bridge to the 30S subunit in the 70S ribosome.

Functionally, this is one of the proteins that bind and probably mediate the attachment of the 5S RNA into the large ribosomal subunit, where it forms part of the central protuberance. In the 70S ribosome it contacts protein S13 of the 30S subunit (bridge B1b), connecting the 2 subunits; this bridge is implicated in subunit movement. Contacts the P site tRNA; the 5S rRNA and some of its associated proteins might help stabilize positioning of ribosome-bound tRNAs. The polypeptide is Large ribosomal subunit protein uL5 (Staphylococcus epidermidis (strain ATCC 35984 / DSM 28319 / BCRC 17069 / CCUG 31568 / BM 3577 / RP62A)).